The primary structure comprises 342 residues: Glycerol-1-phosphate dehydrogenase [NAD(P)+] (342 aa).

Residues 84 to 88 (GRPID) and 106 to 109 (TSAS) each bind NAD(+). Residue Asp-111 participates in substrate binding. Residue Ser-115 coordinates NAD(+). Asp-160 is a binding site for substrate. Zn(2+)-binding residues include Asp-160 and His-241. Position 245 (His-245) interacts with substrate. Residue His-260 coordinates Zn(2+).

Belongs to the glycerol-1-phosphate dehydrogenase family. In terms of assembly, homodimer. The cofactor is Zn(2+).

The protein localises to the cytoplasm. It carries out the reaction sn-glycerol 1-phosphate + NAD(+) = dihydroxyacetone phosphate + NADH + H(+). It catalyses the reaction sn-glycerol 1-phosphate + NADP(+) = dihydroxyacetone phosphate + NADPH + H(+). It participates in membrane lipid metabolism; glycerophospholipid metabolism. In terms of biological role, catalyzes the NAD(P)H-dependent reduction of dihydroxyacetonephosphate (DHAP or glycerone phosphate) to glycerol 1-phosphate (G1P). The G1P thus generated is used as the glycerophosphate backbone of phospholipids in the cellular membranes of Archaea. In Pyrobaculum islandicum (strain DSM 4184 / JCM 9189 / GEO3), this protein is Glycerol-1-phosphate dehydrogenase [NAD(P)+].